A 178-amino-acid polypeptide reads, in one-letter code: Mediator of RNA polymerase II transcription subunit 31 (178 aa).

A compositionally biased stretch (acidic residues) spans 129–140 (EGQELEESEDEA). Positions 129–178 (EGQELEESEDEADIRQKDTEDEDDEETMKKPDADTAEKNSTTSTVSKKEK) are disordered. Basic and acidic residues predominate over residues 155–165 (TMKKPDADTAE). Polar residues predominate over residues 166-178 (KNSTTSTVSKKEK).

The protein belongs to the Mediator complex subunit 31 family. Component of the Mediator complex.

It is found in the nucleus. Functionally, component of the Mediator complex, a coactivator involved in the regulated transcription of nearly all RNA polymerase II-dependent genes. Mediator functions as a bridge to convey information from gene-specific regulatory proteins to the basal RNA polymerase II transcription machinery. Mediator is recruited to promoters by direct interactions with regulatory proteins and serves as a scaffold for the assembly of a functional preinitiation complex with RNA polymerase II and the general transcription factors. This Caenorhabditis elegans protein is Mediator of RNA polymerase II transcription subunit 31.